The primary structure comprises 925 residues: Serine/threonine-protein kinase SIK2 (925 aa).

Residues 20–271 (YDIEGTLGKG…IAQIKEHKWM (252 aa)) enclose the Protein kinase domain. A Phosphothreonine modification is found at Thr25. ATP is bound by residues 26-34 (LGKGNFAVV) and Lys49. Lys53 is modified (N6-acetyllysine; by EP300). Residue Asp142 is the Proton acceptor of the active site. Thr175 carries the phosphothreonine modification. Residues 295-335 (EFNEQVLRLMHSLGIDQQKTIESLQNKSYNHFAAIYFLLVE) form the UBA domain. Ser534 carries the post-translational modification Phosphoserine. The tract at residues 564-586 (ALSSQKREVHNRSPVSFREGRRA) is disordered. Ser587 carries the post-translational modification Phosphoserine. Disordered stretches follow at residues 630 to 674 (PNLA…PRQS), 742 to 776 (SSYP…PLSP), and 800 to 895 (QPLP…SSYD). 2 stretches are compositionally biased toward low complexity: residues 648-659 (QEEVSQQQESVS) and 742-756 (SSYP…LPRQ). The segment covering 765–774 (APPFSLTQPL) has biased composition (polar residues). Over residues 808–820 (PRAAPLPTQLQQQ) the composition is skewed to low complexity. Positions 821–833 (QPPPPPPPPPPRQ) are enriched in pro residues.

Belongs to the protein kinase superfamily. CAMK Ser/Thr protein kinase family. SNF1 subfamily. As to quaternary structure, interacts with and phosphorylates TORC2/CRTC2. Mg(2+) is required as a cofactor. In terms of processing, phosphorylated at Thr-175 by STK11/LKB1 in complex with STE20-related adapter-alpha (STRADA) pseudo kinase and CAB39. Phosphorylated at Thr-484 in response to insulin in adipocytes. Post-translationally, acetylation at Lys-53 inhibits kinase activity. Deacetylated by HDAC6.

The protein localises to the cytoplasm. The protein resides in the endoplasmic reticulum membrane. The catalysed reaction is L-seryl-[protein] + ATP = O-phospho-L-seryl-[protein] + ADP + H(+). It catalyses the reaction L-threonyl-[protein] + ATP = O-phospho-L-threonyl-[protein] + ADP + H(+). Its activity is regulated as follows. Activated by phosphorylation on Thr-175. Its function is as follows. Serine/threonine-protein kinase that plays a role in many biological processes such as fatty acid oxidation, autophagy, immune response or glucose metabolism. Phosphorylates 'Ser-794' of IRS1 in insulin-stimulated adipocytes, potentially modulating the efficiency of insulin signal transduction. Inhibits CREB activity by phosphorylating and repressing TORCs, the CREB-specific coactivators. Phosphorylates EP300 and thus inhibits its histone acetyltransferase activity. In turn, regulates the DNA-binding ability of several transcription factors such as PPARA or MLXIPL. Also plays a role in thymic T-cell development. This chain is Serine/threonine-protein kinase SIK2 (SIK2), found in Pongo abelii (Sumatran orangutan).